Reading from the N-terminus, the 58-residue chain is Small ribosomal subunit protein bS21 (58 aa).

Residues 37 to 58 are disordered; it reads FYEKPSVKRKKKSEAARKRKKF. Residues 43–58 show a composition bias toward basic residues; that stretch reads VKRKKKSEAARKRKKF.

Belongs to the bacterial ribosomal protein bS21 family.

The sequence is that of Small ribosomal subunit protein bS21 from Enterococcus faecalis (strain ATCC 700802 / V583).